Reading from the N-terminus, the 175-residue chain is Transcriptional repressor NrdR (175 aa).

Residues 3-32 (CPYCSHPDSKVIDSRDVDDGVRRRRECVVC) fold into a zinc finger. Positions 47 to 137 (LFVVKKDQRR…VYREFTDITQ (91 aa)) constitute an ATP-cone domain.

The protein belongs to the NrdR family. It depends on Zn(2+) as a cofactor.

Its function is as follows. Negatively regulates transcription of bacterial ribonucleotide reductase nrd genes and operons by binding to NrdR-boxes. The protein is Transcriptional repressor NrdR of Dehalococcoides mccartyi (strain CBDB1).